A 453-amino-acid polypeptide reads, in one-letter code: Probable glycine dehydrogenase (decarboxylating) subunit 1 (453 aa).

Belongs to the GcvP family. N-terminal subunit subfamily. In terms of assembly, the glycine cleavage system is composed of four proteins: P, T, L and H. In this organism, the P 'protein' is a heterodimer of two subunits.

It carries out the reaction N(6)-[(R)-lipoyl]-L-lysyl-[glycine-cleavage complex H protein] + glycine + H(+) = N(6)-[(R)-S(8)-aminomethyldihydrolipoyl]-L-lysyl-[glycine-cleavage complex H protein] + CO2. Its function is as follows. The glycine cleavage system catalyzes the degradation of glycine. The P protein binds the alpha-amino group of glycine through its pyridoxal phosphate cofactor; CO(2) is released and the remaining methylamine moiety is then transferred to the lipoamide cofactor of the H protein. This is Probable glycine dehydrogenase (decarboxylating) subunit 1 from Methylococcus capsulatus (strain ATCC 33009 / NCIMB 11132 / Bath).